Consider the following 199-residue polypeptide: N-(5'-phosphoribosyl)anthranilate isomerase (199 aa).

This sequence belongs to the TrpF family.

The enzyme catalyses N-(5-phospho-beta-D-ribosyl)anthranilate = 1-(2-carboxyphenylamino)-1-deoxy-D-ribulose 5-phosphate. The protein operates within amino-acid biosynthesis; L-tryptophan biosynthesis; L-tryptophan from chorismate: step 3/5. In Sulfolobus acidocaldarius (strain ATCC 33909 / DSM 639 / JCM 8929 / NBRC 15157 / NCIMB 11770), this protein is N-(5'-phosphoribosyl)anthranilate isomerase.